We begin with the raw amino-acid sequence, 1018 residues long: DNA polymerase gamma (1018 aa).

It belongs to the DNA polymerase type-A family. Mg(2+) is required as a cofactor.

The protein resides in the mitochondrion. It catalyses the reaction DNA(n) + a 2'-deoxyribonucleoside 5'-triphosphate = DNA(n+1) + diphosphate. In terms of biological role, involved in the replication of mitochondrial DNA. The chain is DNA polymerase gamma (mip1) from Schizosaccharomyces pombe (strain 972 / ATCC 24843) (Fission yeast).